Reading from the N-terminus, the 878-residue chain is Phosphoenolpyruvate carboxylase (878 aa).

Catalysis depends on residues H138 and K545.

The protein belongs to the PEPCase type 1 family. Mg(2+) is required as a cofactor.

It carries out the reaction oxaloacetate + phosphate = phosphoenolpyruvate + hydrogencarbonate. In terms of biological role, forms oxaloacetate, a four-carbon dicarboxylic acid source for the tricarboxylic acid cycle. This Shewanella loihica (strain ATCC BAA-1088 / PV-4) protein is Phosphoenolpyruvate carboxylase.